An 81-amino-acid polypeptide reads, in one-letter code: UPF0248 protein SSO2687 (81 aa).

The protein belongs to the UPF0248 family.

This is UPF0248 protein SSO2687 from Saccharolobus solfataricus (strain ATCC 35092 / DSM 1617 / JCM 11322 / P2) (Sulfolobus solfataricus).